Reading from the N-terminus, the 100-residue chain is Small ribosomal subunit protein uS14 (100 aa).

Belongs to the universal ribosomal protein uS14 family. Part of the 30S ribosomal subunit. Contacts proteins S3 and S10.

Binds 16S rRNA, required for the assembly of 30S particles and may also be responsible for determining the conformation of the 16S rRNA at the A site. The protein is Small ribosomal subunit protein uS14 of Prochlorococcus marinus subsp. pastoris (strain CCMP1986 / NIES-2087 / MED4).